Consider the following 150-residue polypeptide: Ribonuclease K6 (150 aa).

The signal sequence occupies residues 1-23 (MVLCFPLLLLLLVLWGPVCLLHA). Histidine 38 acts as the Proton acceptor in catalysis. 4 cysteine pairs are disulfide-bonded: cysteine 46/cysteine 104, cysteine 60/cysteine 114, cysteine 78/cysteine 129, and cysteine 85/cysteine 92. An N-linked (GlcNAc...) asparagine glycan is attached at asparagine 55. Residues 61–65 (KHQNT) and lysine 86 contribute to the substrate site. Residue asparagine 100 is glycosylated (N-linked (GlcNAc...) asparagine). Arginine 105 contributes to the substrate binding site. The active-site Proton donor is histidine 145.

This sequence belongs to the pancreatic ribonuclease family. As to quaternary structure, interacts (via N-terminus) with bacterial lipopolysaccharide (LPS).

The protein localises to the secreted. Its subcellular location is the lysosome. It localises to the cytoplasmic granule. Functionally, ribonuclease which shows a preference for the pyrimidines uridine and cytosine. Has potent antibacterial activity against a range of Gram-positive and Gram-negative bacteria, including P.aeruginosa, A.baumanii, M.luteus, S.aureus, E.faecalis, E.faecium, S.saprophyticus and E.coli. Causes loss of bacterial membrane integrity, and also promotes agglutination of Gram-negative bacteria. Probably contributes to urinary tract sterility. Bactericidal activity is independent of RNase activity. The polypeptide is Ribonuclease K6 (RNASE6) (Macaca mulatta (Rhesus macaque)).